Here is an 832-residue protein sequence, read N- to C-terminus: Protein P (832 aa).

A terminal protein domain (TP) region spans residues 1 to 177; it reads MPLSCQHFRK…FCGSPYSWEQ (177 aa). Positions 178-335 are spacer; sequence ELQHGAEPFC…NCLSHIVNLL (158 aa). The segment at 198 to 264 is disordered; that stretch reads SIGPAVPSQH…HNTASSSSSC (67 aa). The tract at residues 336 to 679 is polymerase/reverse transcriptase domain (RT); that stretch reads EDWGPCTEHG…YLTLYPVARQ (344 aa). Positions 346–589 constitute a Reverse transcriptase domain; it reads EHLIRIPRTP…YSLHFMGYVI (244 aa). 3 residues coordinate Mg(2+): D418, D540, and D541.

This sequence belongs to the hepadnaviridae P protein family.

The catalysed reaction is DNA(n) + a 2'-deoxyribonucleoside 5'-triphosphate = DNA(n+1) + diphosphate. It carries out the reaction Endonucleolytic cleavage to 5'-phosphomonoester.. Its activity is regulated as follows. Activated by host HSP70 and HSP40 in vitro to be able to bind the epsilon loop of the pgRNA. Because deletion of the RNase H region renders the protein partly chaperone-independent, the chaperones may be needed indirectly to relieve occlusion of the RNA-binding site by this domain. Inhibited by several reverse-transcriptase inhibitors: Lamivudine, Adefovir and Entecavir. In terms of biological role, multifunctional enzyme that converts the viral RNA genome into dsDNA in viral cytoplasmic capsids. This enzyme displays a DNA polymerase activity that can copy either DNA or RNA templates, and a ribonuclease H (RNase H) activity that cleaves the RNA strand of RNA-DNA heteroduplexes in a partially processive 3'- to 5'-endonucleasic mode. Neo-synthesized pregenomic RNA (pgRNA) are encapsidated together with the P protein, and reverse-transcribed inside the nucleocapsid. Initiation of reverse-transcription occurs first by binding the epsilon loop on the pgRNA genome, and is initiated by protein priming, thereby the 5'-end of (-)DNA is covalently linked to P protein. Partial (+)DNA is synthesized from the (-)DNA template and generates the relaxed circular DNA (RC-DNA) genome. After budding and infection, the RC-DNA migrates in the nucleus, and is converted into a plasmid-like covalently closed circular DNA (cccDNA). The activity of P protein does not seem to be necessary for cccDNA generation, and is presumably released from (+)DNA by host nuclear DNA repair machinery. This Pongo pygmaeus (Bornean orangutan) protein is Protein P.